The following is a 397-amino-acid chain: MKILVVNCGSSSLKYQLIDMTSEEALAKGLVERIGIEGSILTQKVNGEKYIIEEPMKDHKKAIELVLKALVDKEHGVISDMSEIAAVGHRVVHGGEKYASSVLIDDEVMKALEDCVKLAPLHNPPNIIGINACRELMPKTPMVAVFDTAFHQTLPDYAYMYPLPYELYEQNGIRKYGFHGTSHRYVSSVASEMMGKDLKDLKVITCHLGNGASLCAVKEGKSVETSMGFTPLAGLAMGTRCGDIDPAILLFMERELKMSPDEVDTVINKKSGVLGISGVSSDFRDIEGAAEEGNKRAKLALDVYHYTVRQTIGAYTAVLNGVDAIVFTAGLGENSAASREEILNGLEYLGIKIDAEKNKQRGKQIEISTEDSKVKVFVIPTDEELMIARDTKEITAK.

Asparagine 7 provides a ligand contact to Mg(2+). Lysine 14 is a binding site for ATP. Residue arginine 90 coordinates substrate. Aspartate 147 serves as the catalytic Proton donor/acceptor. ATP contacts are provided by residues 207-211 (HLGNG), 282-284 (DFR), and 330-334 (GLGEN). Glutamate 383 contributes to the Mg(2+) binding site.

This sequence belongs to the acetokinase family. In terms of assembly, homodimer. Mg(2+) is required as a cofactor. It depends on Mn(2+) as a cofactor.

Its subcellular location is the cytoplasm. It catalyses the reaction acetate + ATP = acetyl phosphate + ADP. Its pathway is metabolic intermediate biosynthesis; acetyl-CoA biosynthesis; acetyl-CoA from acetate: step 1/2. Catalyzes the formation of acetyl phosphate from acetate and ATP. Can also catalyze the reverse reaction. The sequence is that of Acetate kinase from Clostridium botulinum (strain Kyoto / Type A2).